Reading from the N-terminus, the 101-residue chain is Small ribosomal subunit protein uS14 (101 aa).

Residues 1 to 10 (MAKKSSIEKN) show a composition bias toward basic and acidic residues. Residues 1–23 (MAKKSSIEKNNRRKKMTKNAAPK) form a disordered region. A compositionally biased stretch (basic residues) spans 11 to 23 (NRRKKMTKNAAPK).

This sequence belongs to the universal ribosomal protein uS14 family. Part of the 30S ribosomal subunit. Contacts proteins S3 and S10.

Its function is as follows. Binds 16S rRNA, required for the assembly of 30S particles and may also be responsible for determining the conformation of the 16S rRNA at the A site. The polypeptide is Small ribosomal subunit protein uS14 (Rhodopseudomonas palustris (strain HaA2)).